The following is a 509-amino-acid chain: 2-isopropylmalate synthase (509 aa).

The 263-residue stretch at 5–267 (IQIFDTTLRD…QTALNLEETK (263 aa)) folds into the Pyruvate carboxyltransferase domain. Mn(2+) is bound by residues Asp14, His202, His204, and Asn238. The segment at 391 to 509 (KLETLQLQYV…AAENVEKVGN (119 aa)) is regulatory domain.

It belongs to the alpha-IPM synthase/homocitrate synthase family. LeuA type 1 subfamily. In terms of assembly, homodimer. Mn(2+) is required as a cofactor.

The protein localises to the cytoplasm. The enzyme catalyses 3-methyl-2-oxobutanoate + acetyl-CoA + H2O = (2S)-2-isopropylmalate + CoA + H(+). It functions in the pathway amino-acid biosynthesis; L-leucine biosynthesis; L-leucine from 3-methyl-2-oxobutanoate: step 1/4. In terms of biological role, catalyzes the condensation of the acetyl group of acetyl-CoA with 3-methyl-2-oxobutanoate (2-ketoisovalerate) to form 3-carboxy-3-hydroxy-4-methylpentanoate (2-isopropylmalate). The polypeptide is 2-isopropylmalate synthase (Staphylococcus aureus (strain USA300)).